Reading from the N-terminus, the 164-residue chain is Cyclic pyranopterin monophosphate synthase (164 aa).

Residues methionine 75–histidine 77 and methionine 116–glutamate 117 contribute to the substrate site. Residue aspartate 131 is part of the active site.

It belongs to the MoaC family. In terms of assembly, homohexamer; trimer of dimers.

The enzyme catalyses (8S)-3',8-cyclo-7,8-dihydroguanosine 5'-triphosphate = cyclic pyranopterin phosphate + diphosphate. The protein operates within cofactor biosynthesis; molybdopterin biosynthesis. Its function is as follows. Catalyzes the conversion of (8S)-3',8-cyclo-7,8-dihydroguanosine 5'-triphosphate to cyclic pyranopterin monophosphate (cPMP). This is Cyclic pyranopterin monophosphate synthase from Staphylococcus aureus (strain MRSA252).